The chain runs to 216 residues: Nucleoside triphosphate pyrophosphatase (216 aa).

Catalysis depends on Asp82, which acts as the Proton acceptor.

It belongs to the Maf family. The cofactor is a divalent metal cation.

The protein localises to the cytoplasm. The catalysed reaction is a ribonucleoside 5'-triphosphate + H2O = a ribonucleoside 5'-phosphate + diphosphate + H(+). It catalyses the reaction a 2'-deoxyribonucleoside 5'-triphosphate + H2O = a 2'-deoxyribonucleoside 5'-phosphate + diphosphate + H(+). Nucleoside triphosphate pyrophosphatase. May have a dual role in cell division arrest and in preventing the incorporation of modified nucleotides into cellular nucleic acids. The sequence is that of Nucleoside triphosphate pyrophosphatase from Mycobacterium marinum (strain ATCC BAA-535 / M).